A 203-amino-acid chain; its full sequence is Nucleoside triphosphate pyrophosphatase (203 aa).

Catalysis depends on aspartate 80, which acts as the Proton acceptor.

This sequence belongs to the Maf family. The cofactor is a divalent metal cation.

The protein resides in the cytoplasm. The catalysed reaction is a ribonucleoside 5'-triphosphate + H2O = a ribonucleoside 5'-phosphate + diphosphate + H(+). It catalyses the reaction a 2'-deoxyribonucleoside 5'-triphosphate + H2O = a 2'-deoxyribonucleoside 5'-phosphate + diphosphate + H(+). In terms of biological role, nucleoside triphosphate pyrophosphatase. May have a dual role in cell division arrest and in preventing the incorporation of modified nucleotides into cellular nucleic acids. The polypeptide is Nucleoside triphosphate pyrophosphatase (Gluconobacter oxydans (strain 621H) (Gluconobacter suboxydans)).